A 148-amino-acid chain; its full sequence is Ribonuclease H (148 aa).

The region spanning 1–142 (MSDSVEMFTD…ADQLANRGVD (142 aa)) is the RNase H type-1 domain. D10, E48, D70, and D134 together coordinate Mg(2+).

It belongs to the RNase H family. As to quaternary structure, monomer. Mg(2+) serves as cofactor.

It is found in the cytoplasm. The enzyme catalyses Endonucleolytic cleavage to 5'-phosphomonoester.. Functionally, endonuclease that specifically degrades the RNA of RNA-DNA hybrids. The protein is Ribonuclease H of Pseudomonas putida (strain ATCC 700007 / DSM 6899 / JCM 31910 / BCRC 17059 / LMG 24140 / F1).